Here is a 231-residue protein sequence, read N- to C-terminus: MATPAQLGLQNATSPIMEELIAFHDHALMIIFLISSLVLYIISLMLTTKLTHTSTMNAQEIEMIWTILPAIILIMIALPSLRILYMTDEFNKPYLTLKAIGHQWYWSYEYSDYEDLAFDSYITPTYFLEPGEFRLLEVDNRTTLPMEADIRMLITSQDVLHSWAVPSLGVKTDAIPGRLNQAMLASMRPGLFYGQCSEICGSNHSFMPIVLEFIYFQDFEVWASYLYIVSL.

Over 1 to 14 (MATPAQLGLQNATS) the chain is Mitochondrial intermembrane. The chain crosses the membrane as a helical span at residues 15 to 45 (PIMEELIAFHDHALMIIFLISSLVLYIISLM). Residues 46–59 (LTTKLTHTSTMNAQ) lie on the Mitochondrial matrix side of the membrane. A helical membrane pass occupies residues 60–87 (EIEMIWTILPAIILIMIALPSLRILYMT). Residues 88–231 (DEFNKPYLTL…WASYLYIVSL (144 aa)) are Mitochondrial intermembrane-facing. Cu cation contacts are provided by H161, C196, E198, C200, H204, and M207. Mg(2+) is bound at residue E198.

This sequence belongs to the cytochrome c oxidase subunit 2 family. In terms of assembly, component of the cytochrome c oxidase (complex IV, CIV), a multisubunit enzyme composed of 14 subunits. The complex is composed of a catalytic core of 3 subunits MT-CO1, MT-CO2 and MT-CO3, encoded in the mitochondrial DNA, and 11 supernumerary subunits COX4I, COX5A, COX5B, COX6A, COX6B, COX6C, COX7A, COX7B, COX7C, COX8 and NDUFA4, which are encoded in the nuclear genome. The complex exists as a monomer or a dimer and forms supercomplexes (SCs) in the inner mitochondrial membrane with NADH-ubiquinone oxidoreductase (complex I, CI) and ubiquinol-cytochrome c oxidoreductase (cytochrome b-c1 complex, complex III, CIII), resulting in different assemblies (supercomplex SCI(1)III(2)IV(1) and megacomplex MCI(2)III(2)IV(2)). Found in a complex with TMEM177, COA6, COX18, COX20, SCO1 and SCO2. Interacts with TMEM177 in a COX20-dependent manner. Interacts with COX20. Interacts with COX16. Cu cation is required as a cofactor.

The protein localises to the mitochondrion inner membrane. The enzyme catalyses 4 Fe(II)-[cytochrome c] + O2 + 8 H(+)(in) = 4 Fe(III)-[cytochrome c] + 2 H2O + 4 H(+)(out). Its function is as follows. Component of the cytochrome c oxidase, the last enzyme in the mitochondrial electron transport chain which drives oxidative phosphorylation. The respiratory chain contains 3 multisubunit complexes succinate dehydrogenase (complex II, CII), ubiquinol-cytochrome c oxidoreductase (cytochrome b-c1 complex, complex III, CIII) and cytochrome c oxidase (complex IV, CIV), that cooperate to transfer electrons derived from NADH and succinate to molecular oxygen, creating an electrochemical gradient over the inner membrane that drives transmembrane transport and the ATP synthase. Cytochrome c oxidase is the component of the respiratory chain that catalyzes the reduction of oxygen to water. Electrons originating from reduced cytochrome c in the intermembrane space (IMS) are transferred via the dinuclear copper A center (CU(A)) of subunit 2 and heme A of subunit 1 to the active site in subunit 1, a binuclear center (BNC) formed by heme A3 and copper B (CU(B)). The BNC reduces molecular oxygen to 2 water molecules using 4 electrons from cytochrome c in the IMS and 4 protons from the mitochondrial matrix. This is Cytochrome c oxidase subunit 2 (MT-CO2) from Aotus nigriceps (Black-headed night monkey).